The following is a 267-amino-acid chain: 2-keto-3-deoxy-L-rhamnonate aldolase (267 aa).

Catalysis depends on H49, which acts as the Proton acceptor. Residue Q151 participates in substrate binding. E153 serves as a coordination point for Mg(2+). Substrate contacts are provided by A178 and D179. D179 is a Mg(2+) binding site.

This sequence belongs to the HpcH/HpaI aldolase family. KDR aldolase subfamily. In terms of assembly, homohexamer. Requires Mg(2+) as cofactor.

The catalysed reaction is 2-dehydro-3-deoxy-L-rhamnonate = (S)-lactaldehyde + pyruvate. In terms of biological role, catalyzes the reversible retro-aldol cleavage of 2-keto-3-deoxy-L-rhamnonate (KDR) to pyruvate and lactaldehyde. This is 2-keto-3-deoxy-L-rhamnonate aldolase from Shigella dysenteriae serotype 1 (strain Sd197).